The sequence spans 325 residues: Holliday junction branch migration complex subunit RuvB (325 aa).

The interval 1–180 is large ATPase domain (RuvB-L); it reads MKNQLLDAKV…FGIHLKLNFY (180 aa). Residues Leu-19, Arg-20, Gly-61, Lys-64, Thr-65, Ser-66, 127 to 129, Arg-170, Tyr-180, and Arg-217 each bind ATP; that span reads EDF. Thr-65 provides a ligand contact to Mg(2+). The small ATPAse domain (RuvB-S) stretch occupies residues 181–251; it reads SCEELTQIVE…ITDYALNQLG (71 aa). A head domain (RuvB-H) region spans residues 254–325; it reads KLGLDSSDHK…ITANALKHLH (72 aa). Residues Arg-290, Arg-309, and Arg-314 each coordinate DNA.

Belongs to the RuvB family. In terms of assembly, homohexamer. Forms an RuvA(8)-RuvB(12)-Holliday junction (HJ) complex. HJ DNA is sandwiched between 2 RuvA tetramers; dsDNA enters through RuvA and exits via RuvB. An RuvB hexamer assembles on each DNA strand where it exits the tetramer. Each RuvB hexamer is contacted by two RuvA subunits (via domain III) on 2 adjacent RuvB subunits; this complex drives branch migration. In the full resolvosome a probable DNA-RuvA(4)-RuvB(12)-RuvC(2) complex forms which resolves the HJ.

Its subcellular location is the cytoplasm. It catalyses the reaction ATP + H2O = ADP + phosphate + H(+). Its function is as follows. The RuvA-RuvB-RuvC complex processes Holliday junction (HJ) DNA during genetic recombination and DNA repair, while the RuvA-RuvB complex plays an important role in the rescue of blocked DNA replication forks via replication fork reversal (RFR). RuvA specifically binds to HJ cruciform DNA, conferring on it an open structure. The RuvB hexamer acts as an ATP-dependent pump, pulling dsDNA into and through the RuvAB complex. RuvB forms 2 homohexamers on either side of HJ DNA bound by 1 or 2 RuvA tetramers; 4 subunits per hexamer contact DNA at a time. Coordinated motions by a converter formed by DNA-disengaged RuvB subunits stimulates ATP hydrolysis and nucleotide exchange. Immobilization of the converter enables RuvB to convert the ATP-contained energy into a lever motion, pulling 2 nucleotides of DNA out of the RuvA tetramer per ATP hydrolyzed, thus driving DNA branch migration. The RuvB motors rotate together with the DNA substrate, which together with the progressing nucleotide cycle form the mechanistic basis for DNA recombination by continuous HJ branch migration. Branch migration allows RuvC to scan DNA until it finds its consensus sequence, where it cleaves and resolves cruciform DNA. The protein is Holliday junction branch migration complex subunit RuvB of Orientia tsutsugamushi (strain Boryong) (Rickettsia tsutsugamushi).